The primary structure comprises 861 residues: Probable beta-glucosidase A (861 aa).

The first 19 residues, 1 to 19 (MKLGWIEVAALAAASVVSA), serve as a signal peptide directing secretion. Residues Asn-62, Asn-212, and Asn-253 are each glycosylated (N-linked (GlcNAc...) asparagine). Asp-281 is an active-site residue. Residues Asn-316, Asn-323, Asn-355, Asn-443, Asn-524, Asn-543, Asn-565, Asn-669, Asn-713, and Asn-846 are each glycosylated (N-linked (GlcNAc...) asparagine).

It belongs to the glycosyl hydrolase 3 family.

The protein localises to the secreted. The catalysed reaction is Hydrolysis of terminal, non-reducing beta-D-glucosyl residues with release of beta-D-glucose.. The protein operates within glycan metabolism; cellulose degradation. In terms of biological role, beta-glucosidases are one of a number of cellulolytic enzymes involved in the degradation of cellulosic biomass. Catalyzes the last step releasing glucose from the inhibitory cellobiose. The polypeptide is Probable beta-glucosidase A (bglA) (Aspergillus flavus (strain ATCC 200026 / FGSC A1120 / IAM 13836 / NRRL 3357 / JCM 12722 / SRRC 167)).